A 198-amino-acid polypeptide reads, in one-letter code: UPF0215 protein NEQ431 (198 aa).

The interval 179–198 is disordered; sequence TKGDSSKPRAGGDSNPGPAG.

This sequence belongs to the UPF0215 family.

In Nanoarchaeum equitans (strain Kin4-M), this protein is UPF0215 protein NEQ431.